Here is a 190-residue protein sequence, read N- to C-terminus: uncharacterized protein (190 aa).

Belongs to the Iojap/RsfS family.

This is an uncharacterized protein from Caenorhabditis elegans.